The following is a 290-amino-acid chain: Putative phosphatase MPN_427 (290 aa).

Asp-16 serves as the catalytic Nucleophile. Residue Asp-16 coordinates Mg(2+). A phosphate-binding site is contributed by Leu-17. Mg(2+) is bound at residue Asp-18. Residues 53-54 and Lys-216 contribute to the phosphate site; that span reads TG. Asp-239 and Ser-240 together coordinate Mg(2+). Asn-242 serves as a coordination point for phosphate.

The protein belongs to the HAD-like hydrolase superfamily. Cof family. Mg(2+) serves as cofactor.

This Mycoplasma pneumoniae (strain ATCC 29342 / M129 / Subtype 1) (Mycoplasmoides pneumoniae) protein is Putative phosphatase MPN_427.